Reading from the N-terminus, the 412-residue chain is L-cysteine:1D-myo-inositol 2-amino-2-deoxy-alpha-D-glucopyranoside ligase (412 aa).

Cysteine 43 is a Zn(2+) binding site. L-cysteinyl-5'-AMP contacts are provided by residues 43–46 (CGIT), threonine 58, and 81–83 (NVT). The 'HIGH' region motif lies at 45-55 (ITPYDATHLGH). The 'ERGGDP' region motif lies at 187–192 (ERGGDP). Position 227 (tryptophan 227) interacts with L-cysteinyl-5'-AMP. Zn(2+) is bound at residue cysteine 231. L-cysteinyl-5'-AMP is bound at residue 249 to 251 (GSD). Histidine 256 contributes to the Zn(2+) binding site. Isoleucine 283 is an L-cysteinyl-5'-AMP binding site. The 'KMSKS' region signature appears at 289 to 293 (KMSKS).

It belongs to the class-I aminoacyl-tRNA synthetase family. MshC subfamily. As to quaternary structure, monomer. Zn(2+) serves as cofactor.

It carries out the reaction 1D-myo-inositol 2-amino-2-deoxy-alpha-D-glucopyranoside + L-cysteine + ATP = 1D-myo-inositol 2-(L-cysteinylamino)-2-deoxy-alpha-D-glucopyranoside + AMP + diphosphate + H(+). Its function is as follows. Catalyzes the ATP-dependent condensation of GlcN-Ins and L-cysteine to form L-Cys-GlcN-Ins. This is L-cysteine:1D-myo-inositol 2-amino-2-deoxy-alpha-D-glucopyranoside ligase (mshC) from Mycolicibacterium smegmatis (strain ATCC 700084 / mc(2)155) (Mycobacterium smegmatis).